Reading from the N-terminus, the 720-residue chain is Inactive serine protease PAMR1 (720 aa).

Residues Met-1 to Ser-21 form the signal peptide. 8 disulfides stabilise this stretch: Cys-128–Cys-150, Cys-177–Cys-199, Cys-239–Cys-250, Cys-244–Cys-260, Cys-262–Cys-271, Cys-280–Cys-329, Cys-315–Cys-342, and Cys-414–Cys-442. Positions Cys-128–Ile-236 constitute a CUB domain. The EGF-like domain maps to Glu-235 to Glu-272. Sushi domains are found at residues Arg-278–Lys-344 and Ala-387–Pro-444. Residues Ile-445–Lys-720 form the Peptidase S1 domain. N-linked (GlcNAc...) asparagine glycosylation is present at Asn-451. A disulfide bond links Cys-489 and Cys-505. N-linked (GlcNAc...) asparagine glycosylation is present at Asn-614. Cystine bridges form between Cys-630-Cys-649 and Cys-661-Cys-697.

This sequence belongs to the peptidase S1 family.

It is found in the secreted. May play a role in regeneration of skeletal muscle. This is Inactive serine protease PAMR1 (PAMR1) from Pongo abelii (Sumatran orangutan).